Consider the following 246-residue polypeptide: MAAPGPALCLFDVDGTLTAPRQKITKDMDCFLQKLRQKIKIGVVGGSDFEKVQEQLGDDVIKKYDYVFPENGLVAYRDGKLLCKQNIQGHLGEALIQDLINYCLSYIAKIKLPKKRGTFIEFRNGMLNVSPIGRSCSQEERIEFYELDQKENIRQKFVEDLRKEFAGKGLTFSIGGQISFDVFPDGWDKRYCLGHVEKDGYKTIYFFGDKTMPGGNDHEIFTDPRTVGYTVAAPEDTRRICEELFC.

Ala-2 is subject to N-acetylalanine. Asp-12 serves as the catalytic Nucleophile. Mg(2+) contacts are provided by Asp-12 and Asp-14. Residue Asp-14 is the Proton donor/acceptor of the active site. Alpha-D-mannose 1-phosphate-binding residues include Arg-21, Arg-123, Arg-134, Arg-141, Ser-179, and Asp-181. Residues Asp-209, Phe-221, Asp-223, and Thr-226 each coordinate Mg(2+).

This sequence belongs to the eukaryotic PMM family. Homodimer.

The protein localises to the cytoplasm. It carries out the reaction alpha-D-mannose 1-phosphate = D-mannose 6-phosphate. Its pathway is nucleotide-sugar biosynthesis; GDP-alpha-D-mannose biosynthesis; alpha-D-mannose 1-phosphate from D-fructose 6-phosphate: step 2/2. Involved in the synthesis of the GDP-mannose and dolichol-phosphate-mannose required for a number of critical mannosyl transfer reactions. This chain is Phosphomannomutase 2 (PMM2), found in Bos taurus (Bovine).